Reading from the N-terminus, the 539-residue chain is Phosphoenolpyruvate carboxykinase (ATP) (539 aa).

Arginine 64, tyrosine 206, and lysine 212 together coordinate substrate. ATP-binding positions include lysine 212, histidine 231, and 247–255; that span reads GLSGTGKTT. Positions 212 and 231 each coordinate Mn(2+). Aspartate 268 is a binding site for Mn(2+). Residues glutamate 296, arginine 332, 448–449, and threonine 454 each bind ATP; that span reads RI. A substrate-binding site is contributed by arginine 332.

The protein belongs to the phosphoenolpyruvate carboxykinase (ATP) family. As to quaternary structure, monomer. Mn(2+) is required as a cofactor.

The protein resides in the cytoplasm. It catalyses the reaction oxaloacetate + ATP = phosphoenolpyruvate + ADP + CO2. The protein operates within carbohydrate biosynthesis; gluconeogenesis. Its function is as follows. Involved in the gluconeogenesis. Catalyzes the conversion of oxaloacetate (OAA) to phosphoenolpyruvate (PEP) through direct phosphoryl transfer between the nucleoside triphosphate and OAA. The polypeptide is Phosphoenolpyruvate carboxykinase (ATP) (Edwardsiella ictaluri (strain 93-146)).